The chain runs to 400 residues: Phosphoglycerate kinase (400 aa).

Substrate is bound by residues 21 to 23 (DFN), arginine 37, 60 to 63 (HLGR), arginine 121, and arginine 154. Residues lysine 204, glutamate 326, and 355 to 358 (GGDS) contribute to the ATP site.

This sequence belongs to the phosphoglycerate kinase family. Monomer.

The protein resides in the cytoplasm. The enzyme catalyses (2R)-3-phosphoglycerate + ATP = (2R)-3-phospho-glyceroyl phosphate + ADP. The protein operates within carbohydrate degradation; glycolysis; pyruvate from D-glyceraldehyde 3-phosphate: step 2/5. The polypeptide is Phosphoglycerate kinase (Chloroflexus aurantiacus (strain ATCC 29366 / DSM 635 / J-10-fl)).